Reading from the N-terminus, the 130-residue chain is Large ribosomal subunit protein bL17 (130 aa).

This sequence belongs to the bacterial ribosomal protein bL17 family. As to quaternary structure, part of the 50S ribosomal subunit. Contacts protein L32.

The chain is Large ribosomal subunit protein bL17 from Delftia acidovorans (strain DSM 14801 / SPH-1).